The sequence spans 448 residues: Endoglucanase (448 aa).

The N-terminal stretch at 1–34 is a signal peptide; that stretch reads MFSKIKKINFFKKTFSFLIAVVMMLFTVLGTNTY. Substrate is bound by residues histidine 70, 74-75, tyrosine 101, and histidine 137; that span reads WY. Glutamate 175 (proton donor) is an active-site residue. Tyrosine 237 contacts substrate. The active-site Nucleophile is glutamate 263. Substrate is bound by residues 269 to 270, tryptophan 297, and 302 to 304; these read AS and KSE.

Belongs to the glycosyl hydrolase 5 (cellulase A) family.

It catalyses the reaction Endohydrolysis of (1-&gt;4)-beta-D-glucosidic linkages in cellulose, lichenin and cereal beta-D-glucans.. The polypeptide is Endoglucanase (eglA) (Clostridium saccharobutylicum).